The following is a 275-amino-acid chain: NH(3)-dependent NAD(+) synthetase (275 aa).

Residue 43-50 participates in ATP binding; the sequence is GISGGVDS. D49 provides a ligand contact to Mg(2+). R145 provides a ligand contact to deamido-NAD(+). Residue T165 coordinates ATP. Residue E170 participates in Mg(2+) binding. The deamido-NAD(+) site is built by K178 and D185. Residues K194 and T216 each coordinate ATP. Position 265–266 (265–266) interacts with deamido-NAD(+); it reads HK.

It belongs to the NAD synthetase family. As to quaternary structure, homodimer.

The enzyme catalyses deamido-NAD(+) + NH4(+) + ATP = AMP + diphosphate + NAD(+) + H(+). Its pathway is cofactor biosynthesis; NAD(+) biosynthesis; NAD(+) from deamido-NAD(+) (ammonia route): step 1/1. In terms of biological role, catalyzes the ATP-dependent amidation of deamido-NAD to form NAD. Uses ammonia as a nitrogen source. This chain is NH(3)-dependent NAD(+) synthetase, found in Shewanella denitrificans (strain OS217 / ATCC BAA-1090 / DSM 15013).